The primary structure comprises 298 residues: Thymidylate synthase (298 aa).

Residues arginine 25 and 159–160 (RR) contribute to the dUMP site. The active-site Nucleophile is the cysteine 179. Residues 200-203 (RSVD), asparagine 211, and 241-243 (HLY) each bind dUMP. Aspartate 203 is a binding site for (6R)-5,10-methylene-5,6,7,8-tetrahydrofolate. Alanine 297 provides a ligand contact to (6R)-5,10-methylene-5,6,7,8-tetrahydrofolate.

The protein belongs to the thymidylate synthase family. Bacterial-type ThyA subfamily. In terms of assembly, homodimer.

Its subcellular location is the cytoplasm. The catalysed reaction is dUMP + (6R)-5,10-methylene-5,6,7,8-tetrahydrofolate = 7,8-dihydrofolate + dTMP. The protein operates within pyrimidine metabolism; dTTP biosynthesis. Catalyzes the reductive methylation of 2'-deoxyuridine-5'-monophosphate (dUMP) to 2'-deoxythymidine-5'-monophosphate (dTMP) while utilizing 5,10-methylenetetrahydrofolate (mTHF) as the methyl donor and reductant in the reaction, yielding dihydrofolate (DHF) as a by-product. This enzymatic reaction provides an intracellular de novo source of dTMP, an essential precursor for DNA biosynthesis. In Cereibacter sphaeroides (strain ATCC 17025 / ATH 2.4.3) (Rhodobacter sphaeroides), this protein is Thymidylate synthase.